A 519-amino-acid polypeptide reads, in one-letter code: tRNA pseudouridine synthase Pus10 (519 aa).

The disordered stretch occupies residues 70 to 98; that stretch reads NENEEIDENTKNNEDTENKADDKSQSNEE. The segment covering 77–98 has biased composition (basic and acidic residues); that stretch reads ENTKNNEDTENKADDKSQSNEE. The THUMP domain maps to 144–265; that stretch reads NESEENESNI…NQKIYLQINP (122 aa). Aspartate 334 acts as the Nucleophile in catalysis. Tyrosine 398 and tyrosine 476 together coordinate substrate.

This sequence belongs to the pseudouridine synthase Pus10 family.

The enzyme catalyses uridine(54) in tRNA = pseudouridine(54) in tRNA. It carries out the reaction uridine(55) in tRNA = pseudouridine(55) in tRNA. Responsible for synthesis of pseudouridine from uracil-54 and uracil-55 in the psi GC loop of transfer RNAs. The chain is tRNA pseudouridine synthase Pus10 from Methanococcus voltae (strain ATCC BAA-1334 / A3).